We begin with the raw amino-acid sequence, 271 residues long: Cartilage-associated protein (271 aa).

The first 15 residues, 1–15, serve as a signal peptide directing secretion; that stretch reads MWRTLLAALLATAGA. Asn-76 carries an N-linked (GlcNAc...) asparagine glycan.

Belongs to the leprecan family. In terms of tissue distribution, found in articular chondrocytes. Expressed in a variety of tissues.

It localises to the secreted. It is found in the extracellular space. The protein resides in the extracellular matrix. In terms of biological role, necessary for efficient 3-hydroxylation of fibrillar collagen prolyl residues. The protein is Cartilage-associated protein (CRTAP) of Gallus gallus (Chicken).